Consider the following 429-residue polypeptide: Glutamate-1-semialdehyde 2,1-aminomutase (429 aa).

Residue K265 is modified to N6-(pyridoxal phosphate)lysine.

This sequence belongs to the class-III pyridoxal-phosphate-dependent aminotransferase family. HemL subfamily. As to quaternary structure, homodimer. Pyridoxal 5'-phosphate is required as a cofactor.

The protein resides in the cytoplasm. The enzyme catalyses (S)-4-amino-5-oxopentanoate = 5-aminolevulinate. Its pathway is porphyrin-containing compound metabolism; protoporphyrin-IX biosynthesis; 5-aminolevulinate from L-glutamyl-tRNA(Glu): step 2/2. This Legionella pneumophila (strain Corby) protein is Glutamate-1-semialdehyde 2,1-aminomutase.